We begin with the raw amino-acid sequence, 442 residues long: Chromosomal replication initiator protein DnaA (442 aa).

The domain I, interacts with DnaA modulators stretch occupies residues 1-68 (MDAWPRCLER…ELLAYFVGNG (68 aa)). The tract at residues 68 to 104 (GDVALAVGSRPRAPEPAPAPVAVPSAPQAAPIVPFAG) is domain II. The interval 105-322 (NLDSHYTFAN…GALNTLVARA (218 aa)) is domain III, AAA+ region. The ATP site is built by G150, G152, K153, and T154. A domain IV, binds dsDNA region spans residues 323 to 442 (NFTGRSITVE…WEKLIRKLSE (120 aa)).

The protein belongs to the DnaA family. As to quaternary structure, oligomerizes as a right-handed, spiral filament on DNA at oriC.

The protein localises to the cytoplasm. In terms of biological role, plays an essential role in the initiation and regulation of chromosomal replication. ATP-DnaA binds to the origin of replication (oriC) to initiate formation of the DNA replication initiation complex once per cell cycle. Binds the DnaA box (a 9 base pair repeat at the origin) and separates the double-stranded (ds)DNA. Forms a right-handed helical filament on oriC DNA; dsDNA binds to the exterior of the filament while single-stranded (ss)DNA is stabiized in the filament's interior. The ATP-DnaA-oriC complex binds and stabilizes one strand of the AT-rich DNA unwinding element (DUE), permitting loading of DNA polymerase. After initiation quickly degrades to an ADP-DnaA complex that is not apt for DNA replication. Binds acidic phospholipids. The polypeptide is Chromosomal replication initiator protein DnaA (Xanthomonas axonopodis pv. citri (strain 306)).